Consider the following 526-residue polypeptide: ATP synthase subunit alpha (526 aa).

An ATP-binding site is contributed by 174 to 181 (GDRKTGKT). Residues 505–520 (FEPARSEVKVETRPQE) are compositionally biased toward basic and acidic residues. The interval 505–526 (FEPARSEVKVETRPQEEEGEEG) is disordered.

It belongs to the ATPase alpha/beta chains family. F-type ATPases have 2 components, CF(1) - the catalytic core - and CF(0) - the membrane proton channel. CF(1) has five subunits: alpha(3), beta(3), gamma(1), delta(1), epsilon(1). CF(0) has three main subunits: a(1), b(2) and c(9-12). The alpha and beta chains form an alternating ring which encloses part of the gamma chain. CF(1) is attached to CF(0) by a central stalk formed by the gamma and epsilon chains, while a peripheral stalk is formed by the delta and b chains.

It localises to the cell membrane. The enzyme catalyses ATP + H2O + 4 H(+)(in) = ADP + phosphate + 5 H(+)(out). In terms of biological role, produces ATP from ADP in the presence of a proton gradient across the membrane. The alpha chain is a regulatory subunit. The chain is ATP synthase subunit alpha from Rubrobacter xylanophilus (strain DSM 9941 / JCM 11954 / NBRC 16129 / PRD-1).